The primary structure comprises 278 residues: Acetyl-coenzyme A carboxylase carboxyl transferase subunit beta (278 aa).

Residues 23 to 278 (LWSKCDSCGA…QLIKLLGHMK (256 aa)) form the CoA carboxyltransferase N-terminal domain. The Zn(2+) site is built by cysteine 27, cysteine 30, cysteine 46, and cysteine 49. The C4-type zinc-finger motif lies at 27–49 (CDSCGAALHKKQLEDHLYTCPHC).

It belongs to the AccD/PCCB family. As to quaternary structure, acetyl-CoA carboxylase is a heterohexamer composed of biotin carboxyl carrier protein (AccB), biotin carboxylase (AccC) and two subunits each of ACCase subunit alpha (AccA) and ACCase subunit beta (AccD). The cofactor is Zn(2+).

Its subcellular location is the cytoplasm. It catalyses the reaction N(6)-carboxybiotinyl-L-lysyl-[protein] + acetyl-CoA = N(6)-biotinyl-L-lysyl-[protein] + malonyl-CoA. It functions in the pathway lipid metabolism; malonyl-CoA biosynthesis; malonyl-CoA from acetyl-CoA: step 1/1. Its function is as follows. Component of the acetyl coenzyme A carboxylase (ACC) complex. Biotin carboxylase (BC) catalyzes the carboxylation of biotin on its carrier protein (BCCP) and then the CO(2) group is transferred by the transcarboxylase to acetyl-CoA to form malonyl-CoA. The protein is Acetyl-coenzyme A carboxylase carboxyl transferase subunit beta of Chlorobaculum tepidum (strain ATCC 49652 / DSM 12025 / NBRC 103806 / TLS) (Chlorobium tepidum).